The primary structure comprises 109 residues: ATP-dependent Clp protease adapter protein ClpS (109 aa).

The disordered stretch occupies residues 1 to 23; it reads MTERKHDDTGVEEGTGLATKTRP.

Belongs to the ClpS family. As to quaternary structure, binds to the N-terminal domain of the chaperone ClpA.

Involved in the modulation of the specificity of the ClpAP-mediated ATP-dependent protein degradation. The polypeptide is ATP-dependent Clp protease adapter protein ClpS (Maricaulis maris (strain MCS10) (Caulobacter maris)).